Here is a 277-residue protein sequence, read N- to C-terminus: Large ribosomal subunit protein uL2 (277 aa).

A disordered region spans residues 218-277 (PTVRGSVMNPNDHPHGGGEGKAPVGRKAPSTPWGKPALGLKTRNKKAKSDKLIVRRRNEK). A compositionally biased stretch (basic and acidic residues) spans 264–277 (AKSDKLIVRRRNEK).

The protein belongs to the universal ribosomal protein uL2 family. As to quaternary structure, part of the 50S ribosomal subunit. Forms a bridge to the 30S subunit in the 70S ribosome.

Its function is as follows. One of the primary rRNA binding proteins. Required for association of the 30S and 50S subunits to form the 70S ribosome, for tRNA binding and peptide bond formation. It has been suggested to have peptidyltransferase activity; this is somewhat controversial. Makes several contacts with the 16S rRNA in the 70S ribosome. This is Large ribosomal subunit protein uL2 from Streptococcus pyogenes serotype M4 (strain MGAS10750).